A 361-amino-acid chain; its full sequence is Peptide chain release factor 1 (361 aa).

Glutamine 237 is subject to N5-methylglutamine.

The protein belongs to the prokaryotic/mitochondrial release factor family. In terms of processing, methylated by PrmC. Methylation increases the termination efficiency of RF1.

It localises to the cytoplasm. Functionally, peptide chain release factor 1 directs the termination of translation in response to the peptide chain termination codons UAG and UAA. The sequence is that of Peptide chain release factor 1 from Thioalkalivibrio sulfidiphilus (strain HL-EbGR7).